The following is a 676-amino-acid chain: E3 ubiquitin-protein ligase ICP0 (676 aa).

The RING-type zinc-finger motif lies at Cys13–Lys52. 3 disordered regions span residues Asp101–Gly135, His266–Ile486, and Ala555–Gln676. Residues Pro110–Gly135 are compositionally biased toward gly residues. Positions Ser286–Glu303 are enriched in acidic residues. The segment covering Ser304–Thr314 has biased composition (low complexity). The segment covering Ala315 to Glu328 has biased composition (acidic residues). Residues Tyr351–Ala361 are compositionally biased toward polar residues. Low complexity-rich tracts occupy residues Gly375–Ser388 and Leu397–Ala411. A compositionally biased stretch (gly residues) spans Gly422–Ser439. Basic and acidic residues predominate over residues Glu440–Leu450. Positions Thr474 to Ala484 are enriched in pro residues. A compositionally biased stretch (low complexity) spans Ala555 to Pro597.

Auto-ubiquitinated. Post-translationally, the strongly acidic region might serve as a transcriptional activation domain, possibly regulated through phosphorylation by casein kinase II.

It catalyses the reaction S-ubiquitinyl-[E2 ubiquitin-conjugating enzyme]-L-cysteine + [acceptor protein]-L-lysine = [E2 ubiquitin-conjugating enzyme]-L-cysteine + N(6)-ubiquitinyl-[acceptor protein]-L-lysine.. Its function is as follows. Evades nuclear antiviral defenses triggered by dsDNA viruses. Acts during the initial stages of lytic infection and the reactivation of latent viral genome. Prevents the antiviral effect of nuclear bodies by degrading host PML and SP100. The protein is E3 ubiquitin-protein ligase ICP0 (BICP0) of Bos taurus (Bovine).